Here is a 160-residue protein sequence, read N- to C-terminus: SsrA-binding protein (160 aa).

Residues 133–160 (KKLHDKRETEKERDWNRQKSRLLKGNSQ) form a disordered region. A compositionally biased stretch (basic and acidic residues) spans 137-149 (DKRETEKERDWNR).

It belongs to the SmpB family.

It localises to the cytoplasm. In terms of biological role, required for rescue of stalled ribosomes mediated by trans-translation. Binds to transfer-messenger RNA (tmRNA), required for stable association of tmRNA with ribosomes. tmRNA and SmpB together mimic tRNA shape, replacing the anticodon stem-loop with SmpB. tmRNA is encoded by the ssrA gene; the 2 termini fold to resemble tRNA(Ala) and it encodes a 'tag peptide', a short internal open reading frame. During trans-translation Ala-aminoacylated tmRNA acts like a tRNA, entering the A-site of stalled ribosomes, displacing the stalled mRNA. The ribosome then switches to translate the ORF on the tmRNA; the nascent peptide is terminated with the 'tag peptide' encoded by the tmRNA and targeted for degradation. The ribosome is freed to recommence translation, which seems to be the essential function of trans-translation. The protein is SsrA-binding protein of Agrobacterium fabrum (strain C58 / ATCC 33970) (Agrobacterium tumefaciens (strain C58)).